Here is a 314-residue protein sequence, read N- to C-terminus: Methionyl-tRNA formyltransferase (314 aa).

Residue 109–112 (SLLP) participates in (6S)-5,6,7,8-tetrahydrofolate binding.

This sequence belongs to the Fmt family.

It catalyses the reaction L-methionyl-tRNA(fMet) + (6R)-10-formyltetrahydrofolate = N-formyl-L-methionyl-tRNA(fMet) + (6S)-5,6,7,8-tetrahydrofolate + H(+). In terms of biological role, attaches a formyl group to the free amino group of methionyl-tRNA(fMet). The formyl group appears to play a dual role in the initiator identity of N-formylmethionyl-tRNA by promoting its recognition by IF2 and preventing the misappropriation of this tRNA by the elongation apparatus. The chain is Methionyl-tRNA formyltransferase from Syntrophomonas wolfei subsp. wolfei (strain DSM 2245B / Goettingen).